Reading from the N-terminus, the 89-residue chain is MNPIGLGMRGLIRLYQLLLSPVLPASCRFTPSCSSYAMQAIEAHGPVGGTWLGLKRICRCHPWNDGGYDPVPPAHTERGGTMCPSRLPE.

Positions 69-89 (DPVPPAHTERGGTMCPSRLPE) are disordered.

The protein belongs to the UPF0161 family.

It localises to the cell inner membrane. Functionally, could be involved in insertion of integral membrane proteins into the membrane. This chain is Putative membrane protein insertion efficiency factor, found in Paramagnetospirillum magneticum (strain ATCC 700264 / AMB-1) (Magnetospirillum magneticum).